The primary structure comprises 288 residues: Pyruvate synthase subunit PorB (288 aa).

Positions 16, 19, and 44 each coordinate [4Fe-4S] cluster. Residues Ser-137–Pro-148 are compositionally biased toward polar residues. Positions Ser-137–Pro-159 are disordered. The segment covering His-149–Pro-159 has biased composition (basic and acidic residues). Cys-208 provides a ligand contact to [4Fe-4S] cluster.

Heterotetramer of one alpha, one beta, one delta and one gamma chain. [4Fe-4S] cluster is required as a cofactor.

The enzyme catalyses 2 oxidized [2Fe-2S]-[ferredoxin] + pyruvate + CoA = 2 reduced [2Fe-2S]-[ferredoxin] + acetyl-CoA + CO2 + H(+). The protein is Pyruvate synthase subunit PorB (porB) of Methanothermobacter marburgensis (strain ATCC BAA-927 / DSM 2133 / JCM 14651 / NBRC 100331 / OCM 82 / Marburg) (Methanobacterium thermoautotrophicum).